A 277-amino-acid polypeptide reads, in one-letter code: Probable endonuclease 4 (277 aa).

Zn(2+) contacts are provided by H67, H107, E141, D173, H176, H210, D223, H225, and E255.

It belongs to the AP endonuclease 2 family. It depends on Zn(2+) as a cofactor.

The enzyme catalyses Endonucleolytic cleavage to 5'-phosphooligonucleotide end-products.. Endonuclease IV plays a role in DNA repair. It cleaves phosphodiester bonds at apurinic or apyrimidinic (AP) sites, generating a 3'-hydroxyl group and a 5'-terminal sugar phosphate. This is Probable endonuclease 4 from Haloarcula marismortui (strain ATCC 43049 / DSM 3752 / JCM 8966 / VKM B-1809) (Halobacterium marismortui).